The sequence spans 212 residues: MAIGLIGRKVGMTRIFTEDGVSIPVTVIEVAGNRVTQVKTLETDGYRALQVTTGTKKANRITKPEAGHFAKSGVEAGRGLWELRLADGEGEGIEVGAELNVGIFADVAKVDVTGQSKGKGFQGGVKRWNFRTQDMTHGNSLSHRSNGSIGQNQTPGRVFKGKKMSGHMGAERVTTQNLDVVRVDVERNLLLVKGAVPGATNGDLIIKPAVKA.

The segment at 136–155 (THGNSLSHRSNGSIGQNQTP) is disordered. Position 153 is an N5-methylglutamine (Gln153).

It belongs to the universal ribosomal protein uL3 family. In terms of assembly, part of the 50S ribosomal subunit. Forms a cluster with proteins L14 and L19. Post-translationally, methylated by PrmB.

One of the primary rRNA binding proteins, it binds directly near the 3'-end of the 23S rRNA, where it nucleates assembly of the 50S subunit. The polypeptide is Large ribosomal subunit protein uL3 (Shewanella oneidensis (strain ATCC 700550 / JCM 31522 / CIP 106686 / LMG 19005 / NCIMB 14063 / MR-1)).